A 270-amino-acid chain; its full sequence is SAMP-activating enzyme E1 (270 aa).

ATP-binding positions include glycine 42, aspartate 63, serine 70–arginine 74, and lysine 87. Lysine 113 is covalently cross-linked (Glycyl lysine isopeptide (Lys-Gly) (interchain with G-Cter in SAMP2)). Aspartate 131–asparagine 132 provides a ligand contact to ATP. 2 residues coordinate Zn(2+): cysteine 171 and cysteine 174. Catalysis depends on cysteine 188, which acts as the Glycyl thioester intermediate. Cysteine 245 and cysteine 248 together coordinate Zn(2+).

This sequence belongs to the HesA/MoeB/ThiF family. In terms of assembly, interacts with NcsA. The cofactor is Zn(2+). Sampylated at Lys-113 with the archaeal ubiquitin-like protein SAMP2. Also sampylated with SAMP1.

The catalysed reaction is [small archaeal modifier protein]-C-terminal Gly-Gly + ATP + H(+) = [small archaeal modifier protein]-C-terminal Gly-Gly-AMP + diphosphate. Likely activates multiple ubiquitin-like SAMPs for protein conjugation as well as for sulfur transfer, via ATP-dependent adenylation at their C-terminus. In fact, it is required for the formation of all three SAMP1-, SAMP2- and SAMP3-protein conjugates, and for molybdenum cofactor (MoCo) biosynthesis and thiolation of tRNAs. The chain is SAMP-activating enzyme E1 (ubaA) from Haloferax volcanii (strain ATCC 29605 / DSM 3757 / JCM 8879 / NBRC 14742 / NCIMB 2012 / VKM B-1768 / DS2) (Halobacterium volcanii).